Reading from the N-terminus, the 231-residue chain is LexA repressor (231 aa).

The H-T-H motif DNA-binding region spans 26–46; sequence FDEMKLALDLRSKSGIHRLIT. The interval 79 to 98 is disordered; the sequence is VGFQPRVIDGDRPDRPRPAN. A compositionally biased stretch (basic and acidic residues) spans 86 to 95; it reads IDGDRPDRPR. Catalysis depends on for autocatalytic cleavage activity residues Ser-152 and Lys-190.

The protein belongs to the peptidase S24 family. As to quaternary structure, homodimer.

It catalyses the reaction Hydrolysis of Ala-|-Gly bond in repressor LexA.. Functionally, represses a number of genes involved in the response to DNA damage (SOS response), including recA and lexA. In the presence of single-stranded DNA, RecA interacts with LexA causing an autocatalytic cleavage which disrupts the DNA-binding part of LexA, leading to derepression of the SOS regulon and eventually DNA repair. The chain is LexA repressor from Ruegeria pomeroyi (strain ATCC 700808 / DSM 15171 / DSS-3) (Silicibacter pomeroyi).